Consider the following 673-residue polypeptide: Cyclic nucleotide-binding domain-containing protein 2 (673 aa).

Positions 1-15 (MNRSANPEAASSTSH) are enriched in polar residues. The interval 1–89 (MNRSANPEAA…PQPKDRPGVQ (89 aa)) is disordered. The span at 43–86 (PADKSDTTESKSESGSDSRSEEDKESPASIKEIKAETPQPKDRP) shows a compositional bias: basic and acidic residues. 206–329 (CYRSYTESLQ…ETQYRYNFFR (124 aa)) contacts a nucleoside 3',5'-cyclic phosphate.

Testis-specific. Exclusively expressed in testicular germ cells while it is not present in mature sperm (at protein level).

The protein resides in the cytoplasm. The protein localises to the cytosol. Its function is as follows. Essential for male fertility. Plays an important role in spermatogenesis and regulates sperm motility by controlling the development of the flagellar bending of sperm. The protein is Cyclic nucleotide-binding domain-containing protein 2 (Cnbd2) of Mus musculus (Mouse).